Reading from the N-terminus, the 397-residue chain is Tryptophan synthase beta chain (397 aa).

K86 carries the post-translational modification N6-(pyridoxal phosphate)lysine.

The protein belongs to the TrpB family. In terms of assembly, tetramer of two alpha and two beta chains. Requires pyridoxal 5'-phosphate as cofactor.

It carries out the reaction (1S,2R)-1-C-(indol-3-yl)glycerol 3-phosphate + L-serine = D-glyceraldehyde 3-phosphate + L-tryptophan + H2O. Its pathway is amino-acid biosynthesis; L-tryptophan biosynthesis; L-tryptophan from chorismate: step 5/5. Its function is as follows. The beta subunit is responsible for the synthesis of L-tryptophan from indole and L-serine. In Tolumonas auensis (strain DSM 9187 / NBRC 110442 / TA 4), this protein is Tryptophan synthase beta chain.